The primary structure comprises 707 residues: Nucleolin (707 aa).

The interval 1 to 308 (MVKLAKAGKT…KVEGSEPTTP (308 aa)) is disordered. An N6-acetyllysine mark is found at Lys9, Lys15, and Lys16. Over residues 24–46 (VEEDSEDEEMSEDEDDSSGEEEV) the composition is skewed to acidic residues. A phosphoserine mark is found at Ser28, Ser34, Ser40, and Ser41. Residues 56–92 (ATTTPAKKVVVSQTKKAAVPTPAKKAAVTPGKKAVAT) show a composition bias toward low complexity. Repeat 1 spans residues 58-65 (TTPAKKVV). Residues 58 to 135 (TTPAKKVVVS…GAATPAKGAK (78 aa)) form an 8 X 8 AA tandem repeats of X-T-P-X-K-K-X-X region. Ser67 bears the Phosphoserine mark. A phosphothreonine mark is found at Thr69, Thr76, Thr84, and Thr92. Repeat copies occupy residues 75 to 82 (PTPAKKAA), 83 to 90 (VTPGKKAV), and 91 to 98 (ATPAKKNI). At Lys96 the chain carries N6-acetyllysine. Residue Thr99 is modified to Phosphothreonine. The stretch at 99–104 (TPAKVI) is one 5; truncated repeat. N6-acetyllysine is present on Lys102. The stretch at 105-112 (PTPGKKGA) is repeat 6. Thr106 carries the post-translational modification Phosphothreonine. 2 positions are modified to N6-acetyllysine: Lys109 and Lys116. Tandem repeats lie at residues 120–127 (PTPGKKGA) and 128–135 (ATPAKGAK). Phosphothreonine is present on Thr121. Low complexity predominate over residues 121-137 (TPGKKGAATPAKGAKNG). An N6-acetyllysine modification is found at Lys124. Residues Ser145 and Ser157 each carry the phosphoserine modification. Residues 145-170 (SDEDEDEEDEDDSDEDEDDEEEDEFE) are compositionally biased toward acidic residues. Positions 179–188 (PAKAAPAAPA) are enriched in low complexity. Phosphoserine occurs at positions 189 and 212. The segment covering 189 to 217 (SEDEEDDEDEDDEEDDDEEEEDDSEEEVM) has biased composition (acidic residues). Position 220 is a phosphothreonine (Thr220). Over residues 241–273 (EEEDDEEEDEDDEDEDDEEEDDEDDDEEEEEEE) the composition is skewed to acidic residues. Residues 286–302 (MTKQKEAPEAKKQKVEG) are compositionally biased toward basic and acidic residues. Lys299 participates in a covalent cross-link: Glycyl lysine isopeptide (Lys-Gly) (interchain with G-Cter in SUMO1); alternate. Lys299 participates in a covalent cross-link: Glycyl lysine isopeptide (Lys-Gly) (interchain with G-Cter in SUMO2); alternate. Ser303 is modified (phosphoserine). RRM domains follow at residues 309–385 (FNLF…KPKG) and 395–468 (RTLL…YTGE). Lys320 carries the post-translational modification N6-acetyllysine. Lys326 participates in a covalent cross-link: Glycyl lysine isopeptide (Lys-Gly) (interchain with G-Cter in SUMO1); alternate. Residue Lys326 forms a Glycyl lysine isopeptide (Lys-Gly) (interchain with G-Cter in SUMO2); alternate linkage. The residue at position 350 (Lys350) is an N6-acetyllysine. Position 358 is a phosphoserine (Ser358). Thr369 is modified (phosphothreonine). Residue Lys372 forms a Glycyl lysine isopeptide (Lys-Gly) (interchain with G-Cter in SUMO2) linkage. Lys379 participates in a covalent cross-link: Glycyl lysine isopeptide (Lys-Gly) (interchain with G-Cter in SUMO2); alternate. Lys379 is modified (N6-acetyllysine; alternate). Position 400 is an N6-acetyllysine (Lys400). Phosphoserine is present on Ser403. Thr407 carries the phosphothreonine modification. Residues Lys429 and Lys446 each carry the N6-acetyllysine modification. Ser460 and Ser462 each carry phosphoserine. 2 positions are modified to N6-acetyllysine: Lys469 and Lys478. 2 RRM domains span residues 487–561 (KTLV…LQGS) and 569–644 (KTLF…WAKP). A Glycyl lysine isopeptide (Lys-Gly) (interchain with G-Cter in SUMO2); alternate cross-link involves residue Lys514. Residue Lys514 is modified to N6-acetyllysine; alternate. Lys522 and Lys569 each carry N6-acetyllysine. Residue Lys574 forms a Glycyl lysine isopeptide (Lys-Gly) (interchain with G-Cter in SUMO2); alternate linkage. At Lys574 the chain carries N6-acetyllysine; alternate. The residue at position 577 (Ser577) is a Phosphoserine. A Glycyl lysine isopeptide (Lys-Gly) (interchain with G-Cter in SUMO1); alternate cross-link involves residue Lys586. Residue Lys586 forms a Glycyl lysine isopeptide (Lys-Gly) (interchain with G-Cter in SUMO2); alternate linkage. Phosphoserine occurs at positions 588 and 616. Residue Lys621 forms a Glycyl lysine isopeptide (Lys-Gly) (interchain with G-Cter in SUMO2) linkage. Positions 639 to 707 (LDWAKPKGEG…KPQGKKTKFE (69 aa)) are disordered. Lys643 bears the N6-acetyllysine mark. The span at 647–696 (EGGFGGRGGGRGGFGGRGGGRGGRGGFGGRGRGGFGGRGGFRGGRGGGGD) shows a compositional bias: gly residues. Arg653, Arg657, Arg663, Arg667, Arg670, Arg676, Arg678, Arg684, and Arg688 each carry asymmetric dimethylarginine. At Arg691 the chain carries Asymmetric dimethylarginine; alternate. An Omega-N-methylarginine; alternate modification is found at Arg691.

As to quaternary structure, identified in a IGF2BP1-dependent mRNP granule complex containing untranslated mRNAs. Component of the SWAP complex that consists of NPM1, NCL/nucleolin, PARP1 and SWAP70. Component of a complex which is at least composed of HTATSF1/Tat-SF1, the P-TEFb complex components CDK9 and CCNT1, RNA polymerase II, SUPT5H, and NCL/nucleolin. Interacts with AICDA. Interacts with APTX. Interacts with C1QBP. Interacts with ERBB4. Interacts (via C-terminus) with FMR1 isoform 6 (via N-terminus). Interacts with GZF1; this interaction is important for nucleolar localization of GZF1. Interacts with NSUN2. Interacts with NVL. Interacts (via N-terminus domain) with SETX. Interacts (via RRM1 and C-terminal RRM4/Arg/Gly-rich domains) with TERT; the interaction is important for nucleolar localization of TERT. Interacts with WDR46. Interacts with ZFP36. Interacts with LRRC34. Interacts with RRP1B. Interacts with HNRNPU; this interaction occurs during mitosis. Interacts with RIOK1; RIOK1 recruits NCL to PRMT5 for symmetrically methylation. Interacts with ZBTB7B. Interacts with MDK; this interaction promotes NCL clustering and lateral movements of this complex into lipid rafts leading to MDK internalization. Interacts with HDGF. Interacts with ALKBH2. Interacts with IGFBP5; this interaction is necessary for IGFBP5 localization to the nucleus. Interacts with DDX24 (when ubiquitinated); this interaction may be important during ribosome biogenesis. Post-translationally, some glutamate residues are glycylated by TTLL8. This modification occurs exclusively on glutamate residues and results in a glycine chain on the gamma-carboxyl group. In terms of processing, symmetrically methylated by PRMT5. Expressed in B-cells that have been induced to switch to various Ig isotypes.

It localises to the nucleus. The protein localises to the nucleolus. It is found in the cytoplasm. Nucleolin is the major nucleolar protein of growing eukaryotic cells. It is found associated with intranucleolar chromatin and pre-ribosomal particles. It induces chromatin decondensation by binding to histone H1. It is thought to play a role in pre-rRNA transcription and ribosome assembly. May play a role in the process of transcriptional elongation. Binds RNA oligonucleotides with 5'-UUAGGG-3' repeats more tightly than the telomeric single-stranded DNA 5'-TTAGGG-3' repeats. The sequence is that of Nucleolin (Ncl) from Mus musculus (Mouse).